The following is a 491-amino-acid chain: Cytosolic Fe-S cluster assembly factor NAR1 (491 aa).

Cys-20, Cys-59, Cys-62, Cys-65, Cys-177, Cys-231, Cys-412, and Cys-416 together coordinate [4Fe-4S] cluster.

Belongs to the NARF family. As to quaternary structure, interacts with CIA1.

Component of the cytosolic Fe/S protein assembly machinery. Required for maturation of extramitochondrial Fe/S proteins. May play a role in the transfer of pre-assembled Fe/S clusters to target apoproteins. In Saccharomyces cerevisiae (strain YJM789) (Baker's yeast), this protein is Cytosolic Fe-S cluster assembly factor NAR1 (NAR1).